The primary structure comprises 400 residues: Chalcone synthase 7 (400 aa).

The active site involves Cys168.

The protein belongs to the thiolase-like superfamily. Chalcone/stilbene synthases family.

It carries out the reaction (E)-4-coumaroyl-CoA + 3 malonyl-CoA + 3 H(+) = 2',4,4',6'-tetrahydroxychalcone + 3 CO2 + 4 CoA. Its pathway is secondary metabolite biosynthesis; flavonoid biosynthesis. In terms of biological role, the primary product of this enzyme is 4,2',4',6'-tetrahydroxychalcone (also termed naringenin-chalcone or chalcone) which can under specific conditions spontaneously isomerize into naringenin. This Sorghum bicolor (Sorghum) protein is Chalcone synthase 7 (CHS7).